Here is a 68-residue protein sequence, read N- to C-terminus: MKLCVVXVLLMLAMPFNGGEASRFFNQHARSQRSGMKTRGIWCDPPCPEGETCRGGECSDEFNGDLGG.

An N-terminal signal peptide occupies residues Met1 to Glu20. Residues Ala21–Gly68 constitute a propeptide that is removed on maturation. Leu66 carries the leucine amide modification.

Contains 2 disulfide bonds. In terms of tissue distribution, expressed by the venom duct.

It localises to the secreted. Functionally, probable neurotoxin with unknown target. Possibly targets ion channels. This is Conotoxin Cal14.13c from Californiconus californicus (California cone).